A 221-amino-acid chain; its full sequence is MQIYQFGKIVSKNKNYLILENHGSGYLIYVPRIDRFSRDENRKIYIYEHENDYTKITYGFASFRERILFEDLISIQGVGPKTAISALNSGMQNLINLIAANDWKTLAKIPYLSEKNAKQIVFEFQKKYERFNENHKNQTEETNQDSQEKELEKKDDLADITIQKSNLEDKTAANLEDTLKMLGFKPRQIDYALTKVEPNENFENLIENAIKIISNAREFRN.

The domain I stretch occupies residues 1 to 61 (MQIYQFGKIV…DYTKITYGFA (61 aa)). Positions 62 to 139 (SFRERILFED…RFNENHKNQT (78 aa)) are domain II. A disordered region spans residues 133–155 (ENHKNQTEETNQDSQEKELEKKD). The interval 140–166 (EETNQDSQEKELEKKDDLADITIQKSN) is flexible linker. The segment covering 146 to 155 (SQEKELEKKD) has biased composition (basic and acidic residues). The domain III stretch occupies residues 167-221 (LEDKTAANLEDTLKMLGFKPRQIDYALTKVEPNENFENLIENAIKIISNAREFRN).

Belongs to the RuvA family. In terms of assembly, homotetramer. Forms an RuvA(8)-RuvB(12)-Holliday junction (HJ) complex. HJ DNA is sandwiched between 2 RuvA tetramers; dsDNA enters through RuvA and exits via RuvB. An RuvB hexamer assembles on each DNA strand where it exits the tetramer. Each RuvB hexamer is contacted by two RuvA subunits (via domain III) on 2 adjacent RuvB subunits; this complex drives branch migration. In the full resolvosome a probable DNA-RuvA(4)-RuvB(12)-RuvC(2) complex forms which resolves the HJ.

It localises to the cytoplasm. In terms of biological role, the RuvA-RuvB-RuvC complex processes Holliday junction (HJ) DNA during genetic recombination and DNA repair, while the RuvA-RuvB complex plays an important role in the rescue of blocked DNA replication forks via replication fork reversal (RFR). RuvA specifically binds to HJ cruciform DNA, conferring on it an open structure. The RuvB hexamer acts as an ATP-dependent pump, pulling dsDNA into and through the RuvAB complex. HJ branch migration allows RuvC to scan DNA until it finds its consensus sequence, where it cleaves and resolves the cruciform DNA. In Mesomycoplasma hyopneumoniae (strain J / ATCC 25934 / NCTC 10110) (Mycoplasma hyopneumoniae), this protein is Holliday junction branch migration complex subunit RuvA.